The following is a 58-amino-acid chain: Ribulose bisphosphate carboxylase large chain (58 aa).

Positions 1–2 (MS) are excised as a propeptide. The residue at position 3 (proline 3) is an N-acetylproline. N6,N6,N6-trimethyllysine is present on lysine 14.

It belongs to the RuBisCO large chain family. Type I subfamily. As to quaternary structure, heterohexadecamer of 8 large chains and 8 small chains.

The protein resides in the plastid. It is found in the chloroplast. The catalysed reaction is 2 (2R)-3-phosphoglycerate + 2 H(+) = D-ribulose 1,5-bisphosphate + CO2 + H2O. It catalyses the reaction D-ribulose 1,5-bisphosphate + O2 = 2-phosphoglycolate + (2R)-3-phosphoglycerate + 2 H(+). Functionally, ruBisCO catalyzes two reactions: the carboxylation of D-ribulose 1,5-bisphosphate, the primary event in carbon dioxide fixation, as well as the oxidative fragmentation of the pentose substrate in the photorespiration process. Both reactions occur simultaneously and in competition at the same active site. In Weinmannia silvicola (Towai), this protein is Ribulose bisphosphate carboxylase large chain (rbcL).